The chain runs to 100 residues: Small ribosomal subunit protein uS14c (100 aa).

Belongs to the universal ribosomal protein uS14 family. As to quaternary structure, part of the 30S ribosomal subunit.

It localises to the plastid. The protein resides in the chloroplast. Its function is as follows. Binds 16S rRNA, required for the assembly of 30S particles. The protein is Small ribosomal subunit protein uS14c of Cucumis sativus (Cucumber).